Consider the following 411-residue polypeptide: Protein Rv3035 (411 aa).

The polypeptide is Protein Rv3035 (Mycobacterium tuberculosis (strain ATCC 25618 / H37Rv)).